The primary structure comprises 960 residues: Putative helicase L207/L206 (960 aa).

Positions 1 to 32 are disordered; sequence MTSKTENKKSVSSKTGRTTNNSTNKKTTEKSV. The segment covering 12–25 has biased composition (low complexity); sequence SSKTGRTTNNSTNK. Residues 646-807 enclose the SF3 helicase domain; sequence SMREYILTLL…FIKHSEATKK (162 aa).

This Acanthamoeba polyphaga mimivirus (APMV) protein is Putative helicase L207/L206.